The chain runs to 144 residues: D-aminoacyl-tRNA deacylase (144 aa).

The short motif at 136-137 is the Gly-cisPro motif, important for rejection of L-amino acids element; it reads GP.

The protein belongs to the DTD family. As to quaternary structure, homodimer.

The protein localises to the cytoplasm. The enzyme catalyses glycyl-tRNA(Ala) + H2O = tRNA(Ala) + glycine + H(+). It carries out the reaction a D-aminoacyl-tRNA + H2O = a tRNA + a D-alpha-amino acid + H(+). Its function is as follows. An aminoacyl-tRNA editing enzyme that deacylates mischarged D-aminoacyl-tRNAs. Also deacylates mischarged glycyl-tRNA(Ala), protecting cells against glycine mischarging by AlaRS. Acts via tRNA-based rather than protein-based catalysis; rejects L-amino acids rather than detecting D-amino acids in the active site. By recycling D-aminoacyl-tRNA to D-amino acids and free tRNA molecules, this enzyme counteracts the toxicity associated with the formation of D-aminoacyl-tRNA entities in vivo and helps enforce protein L-homochirality. This is D-aminoacyl-tRNA deacylase from Actinobacillus succinogenes (strain ATCC 55618 / DSM 22257 / CCUG 43843 / 130Z).